Here is a 238-residue protein sequence, read N- to C-terminus: Sarcospan (238 aa).

Residues Met-1–Gln-33 form a disordered region. Over Met-1–Pro-48 the chain is Extracellular. Positions Arg-8 to Asp-20 are enriched in low complexity. Residues Leu-49–Met-69 form a helical membrane-spanning segment. Over Ala-70 to Thr-81 the chain is Cytoplasmic. Residues Pro-82–Val-102 form a helical membrane-spanning segment. Over Ser-103 to Lys-117 the chain is Cytoplasmic. Residues Leu-118–Ala-138 traverse the membrane as a helical segment. Residues Ala-139–Val-188 are Extracellular-facing. A helical membrane pass occupies residues Phe-189–Phe-209. The Cytoplasmic segment spans residues Val-210–Val-238.

Its subcellular location is the cell membrane. The protein resides in the sarcolemma. The protein localises to the postsynaptic cell membrane. Functionally, component of the dystrophin-glycoprotein complex (DGC), a complex that spans the muscle plasma membrane and forms a link between the F-actin cytoskeleton and the extracellular matrix. Preferentially associates with the sarcoglycan subcomplex of the DGC. The protein is Sarcospan (SSPN) of Oryctolagus cuniculus (Rabbit).